A 162-amino-acid polypeptide reads, in one-letter code: Regulator of ribonuclease activity A (162 aa).

Belongs to the RraA family. As to quaternary structure, homotrimer. Binds to both RNA-binding sites in the C-terminal region of Rne and to RhlB.

Its subcellular location is the cytoplasm. Globally modulates RNA abundance by binding to RNase E (Rne) and regulating its endonucleolytic activity. Can modulate Rne action in a substrate-dependent manner by altering the composition of the degradosome. Modulates RNA-binding and helicase activities of the degradosome. This Haemophilus influenzae (strain 86-028NP) protein is Regulator of ribonuclease activity A.